Consider the following 339-residue polypeptide: Ribosomal RNA small subunit methyltransferase H (339 aa).

Residues 56–58, Asp-76, Phe-102, Asp-123, and Gln-130 contribute to the S-adenosyl-L-methionine site; that span reads GGH. Disordered stretches follow at residues 274 to 309 and 320 to 339; these read RHSR…KAEV and LRVA…PQHS. The segment covering 325–339 has biased composition (polar residues); that stretch reads RTDTPYNTDPSPQHS.

This sequence belongs to the methyltransferase superfamily. RsmH family.

It localises to the cytoplasm. It catalyses the reaction cytidine(1402) in 16S rRNA + S-adenosyl-L-methionine = N(4)-methylcytidine(1402) in 16S rRNA + S-adenosyl-L-homocysteine + H(+). Its function is as follows. Specifically methylates the N4 position of cytidine in position 1402 (C1402) of 16S rRNA. The chain is Ribosomal RNA small subunit methyltransferase H from Psychrobacter sp. (strain PRwf-1).